The primary structure comprises 226 residues: MLIQIAEVFSAAEAAQIRQRLEQADWVDGRVTAGHQSAQVKHNRQLPEQHPLAQELGELILQRLSANNLFMSAALPRKIFPPLFNRYEGGESFGYHVDNAVRVVPGTSERVRTDLSATLFFSDPDTYDGGELVVDDTYGPRSVKLPAGHLVLYPGTSLHKVNPVTRGARISAFFWMQSLVREDSQRNLLLDMDVAIQRLNQDAAGHPSIVQLTGIYHNLLRRWADV.

A Fe2OG dioxygenase domain is found at Lys78 to Ser178. Residues His96, Asp98, and His159 each contribute to the Fe cation site. Residue Arg169 participates in 2-oxoglutarate binding.

It depends on Fe(2+) as a cofactor. Requires L-ascorbate as cofactor.

This is PKHD-type hydroxylase Bpet2704 from Bordetella petrii (strain ATCC BAA-461 / DSM 12804 / CCUG 43448).